Here is a 95-residue protein sequence, read N- to C-terminus: Pyrimidine/purine nucleoside phosphorylase (95 aa).

The protein belongs to the nucleoside phosphorylase PpnP family.

The catalysed reaction is a purine D-ribonucleoside + phosphate = a purine nucleobase + alpha-D-ribose 1-phosphate. It carries out the reaction adenosine + phosphate = alpha-D-ribose 1-phosphate + adenine. It catalyses the reaction cytidine + phosphate = cytosine + alpha-D-ribose 1-phosphate. The enzyme catalyses guanosine + phosphate = alpha-D-ribose 1-phosphate + guanine. The catalysed reaction is inosine + phosphate = alpha-D-ribose 1-phosphate + hypoxanthine. It carries out the reaction thymidine + phosphate = 2-deoxy-alpha-D-ribose 1-phosphate + thymine. It catalyses the reaction uridine + phosphate = alpha-D-ribose 1-phosphate + uracil. The enzyme catalyses xanthosine + phosphate = alpha-D-ribose 1-phosphate + xanthine. In terms of biological role, catalyzes the phosphorolysis of diverse nucleosides, yielding D-ribose 1-phosphate and the respective free bases. Can use uridine, adenosine, guanosine, cytidine, thymidine, inosine and xanthosine as substrates. Also catalyzes the reverse reactions. The chain is Pyrimidine/purine nucleoside phosphorylase from Enterobacter sp. (strain 638).